We begin with the raw amino-acid sequence, 86 residues long: Acyl carrier protein (86 aa).

The region spanning Glu-5–Ile-80 is the Carrier domain. Ser-40 is subject to O-(pantetheine 4'-phosphoryl)serine.

This sequence belongs to the acyl carrier protein (ACP) family. Post-translationally, 4'-phosphopantetheine is transferred from CoA to a specific serine of apo-ACP by AcpS. This modification is essential for activity because fatty acids are bound in thioester linkage to the sulfhydryl of the prosthetic group.

The protein localises to the plastid. It is found in the chloroplast. The protein operates within lipid metabolism; fatty acid biosynthesis. Its function is as follows. Carrier of the growing fatty acid chain in fatty acid biosynthesis. The polypeptide is Acyl carrier protein (Cyanidium caldarium (Red alga)).